A 284-amino-acid polypeptide reads, in one-letter code: 4-diphosphocytidyl-2-C-methyl-D-erythritol kinase (284 aa).

Lysine 14 is an active-site residue. 97–107 (PMGGGLGGGSS) contributes to the ATP binding site. Aspartate 139 is a catalytic residue.

The protein belongs to the GHMP kinase family. IspE subfamily.

The enzyme catalyses 4-CDP-2-C-methyl-D-erythritol + ATP = 4-CDP-2-C-methyl-D-erythritol 2-phosphate + ADP + H(+). It functions in the pathway isoprenoid biosynthesis; isopentenyl diphosphate biosynthesis via DXP pathway; isopentenyl diphosphate from 1-deoxy-D-xylulose 5-phosphate: step 3/6. Its function is as follows. Catalyzes the phosphorylation of the position 2 hydroxy group of 4-diphosphocytidyl-2C-methyl-D-erythritol. This is 4-diphosphocytidyl-2-C-methyl-D-erythritol kinase from Psychromonas ingrahamii (strain DSM 17664 / CCUG 51855 / 37).